We begin with the raw amino-acid sequence, 347 residues long: NADH-ubiquinone oxidoreductase chain 2 (347 aa).

A run of 10 helical transmembrane segments spans residues 3-23 (PLIF…TMIS), 26-46 (WLLI…IIMM), 67-87 (SMLL…WTIM), 96-116 (YMMT…FWVP), 149-169 (LNLN…GWGG), 178-198 (IMAY…MYNT), 200-220 (LMML…ALFI), 239-259 (ILTT…PLSG), 274-294 (NMLL…YFYM), and 325-345 (LSPT…MMLI).

It belongs to the complex I subunit 2 family. In terms of assembly, core subunit of respiratory chain NADH dehydrogenase (Complex I) which is composed of 45 different subunits. Interacts with TMEM242.

The protein resides in the mitochondrion inner membrane. The enzyme catalyses a ubiquinone + NADH + 5 H(+)(in) = a ubiquinol + NAD(+) + 4 H(+)(out). Its function is as follows. Core subunit of the mitochondrial membrane respiratory chain NADH dehydrogenase (Complex I) which catalyzes electron transfer from NADH through the respiratory chain, using ubiquinone as an electron acceptor. Essential for the catalytic activity and assembly of complex I. The sequence is that of NADH-ubiquinone oxidoreductase chain 2 from Dasypus novemcinctus (Nine-banded armadillo).